The following is a 116-amino-acid chain: Large ribosomal subunit protein bL19 (116 aa).

It belongs to the bacterial ribosomal protein bL19 family.

Functionally, this protein is located at the 30S-50S ribosomal subunit interface and may play a role in the structure and function of the aminoacyl-tRNA binding site. This is Large ribosomal subunit protein bL19 from Pasteurella multocida (strain Pm70).